A 356-amino-acid chain; its full sequence is Vacuolar protein sorting-associated protein 26 (356 aa).

The interval 301–356 (MRRPGTEDDEEEKQTTSIPGTQKFTAPAPVEHPKPESPRSDPKSGSTSPDDNSDSS) is disordered. Positions 315-324 (TTSIPGTQKF) are enriched in polar residues. A compositionally biased stretch (basic and acidic residues) spans 331–342 (EHPKPESPRSDP).

Belongs to the VPS26 family.

May play a role in vesicular protein sorting, similar to the yeast retromer proteins. In Caenorhabditis elegans, this protein is Vacuolar protein sorting-associated protein 26 (vps-26).